A 388-amino-acid chain; its full sequence is Lipoyl synthase, mitochondrial (388 aa).

Residues 1–18 (MRLTTVQRRFLVSTKAKV) constitute a mitochondrion transit peptide. The segment covering 22 to 39 (SISSTANTGSASAGAPNG) has biased composition (low complexity). Residues 22-43 (SISSTANTGSASAGAPNGQTRR) form a disordered region. [4Fe-4S] cluster-binding residues include Cys-120, Cys-125, Cys-131, Cys-151, Cys-155, Cys-158, and Ser-366. The region spanning 134 to 355 (GKDKSKATAT…KDKAKEMGFL (222 aa)) is the Radical SAM core domain.

It belongs to the radical SAM superfamily. Lipoyl synthase family. [4Fe-4S] cluster serves as cofactor.

Its subcellular location is the mitochondrion. The enzyme catalyses [[Fe-S] cluster scaffold protein carrying a second [4Fe-4S](2+) cluster] + N(6)-octanoyl-L-lysyl-[protein] + 2 oxidized [2Fe-2S]-[ferredoxin] + 2 S-adenosyl-L-methionine + 4 H(+) = [[Fe-S] cluster scaffold protein] + N(6)-[(R)-dihydrolipoyl]-L-lysyl-[protein] + 4 Fe(3+) + 2 hydrogen sulfide + 2 5'-deoxyadenosine + 2 L-methionine + 2 reduced [2Fe-2S]-[ferredoxin]. It functions in the pathway protein modification; protein lipoylation via endogenous pathway; protein N(6)-(lipoyl)lysine from octanoyl-[acyl-carrier-protein]: step 2/2. In terms of biological role, catalyzes the radical-mediated insertion of two sulfur atoms into the C-6 and C-8 positions of the octanoyl moiety bound to the lipoyl domains of lipoate-dependent enzymes, thereby converting the octanoylated domains into lipoylated derivatives. This is Lipoyl synthase, mitochondrial from Candida glabrata (strain ATCC 2001 / BCRC 20586 / JCM 3761 / NBRC 0622 / NRRL Y-65 / CBS 138) (Yeast).